We begin with the raw amino-acid sequence, 283 residues long: uncharacterized protein (283 aa).

An N-terminal signal peptide occupies residues 1-25 (MNKKRLLFRTPLDALFLLFGTALSA). Residue Cys-26 is the site of N-palmitoyl cysteine attachment. The S-diacylglycerol cysteine moiety is linked to residue Cys-26.

Belongs to the MG439/MG440 family.

It is found in the cell membrane. This is an uncharacterized protein from Mycoplasma pneumoniae (strain ATCC 29342 / M129 / Subtype 1) (Mycoplasmoides pneumoniae).